A 330-amino-acid polypeptide reads, in one-letter code: Ketol-acid reductoisomerase (NADP(+)) (330 aa).

The KARI N-terminal Rossmann domain occupies 1 to 181; the sequence is MKVFYDSDFK…GLSRAGVIQT (181 aa). NADP(+)-binding positions include 24-27, Arg-47, Ser-52, and 82-85; these read YGSQ and DELQ. His-107 is an active-site residue. An NADP(+)-binding site is contributed by Gly-133. Positions 182-327 constitute a KARI C-terminal knotted domain; that stretch reads TFKEETETDL…AKLRKMCGLE (146 aa). Residues Asp-190, Glu-194, Glu-226, and Glu-230 each contribute to the Mg(2+) site. Ser-251 serves as a coordination point for substrate.

Belongs to the ketol-acid reductoisomerase family. Requires Mg(2+) as cofactor.

The catalysed reaction is (2R)-2,3-dihydroxy-3-methylbutanoate + NADP(+) = (2S)-2-acetolactate + NADPH + H(+). The enzyme catalyses (2R,3R)-2,3-dihydroxy-3-methylpentanoate + NADP(+) = (S)-2-ethyl-2-hydroxy-3-oxobutanoate + NADPH + H(+). The protein operates within amino-acid biosynthesis; L-isoleucine biosynthesis; L-isoleucine from 2-oxobutanoate: step 2/4. Its pathway is amino-acid biosynthesis; L-valine biosynthesis; L-valine from pyruvate: step 2/4. Functionally, involved in the biosynthesis of branched-chain amino acids (BCAA). Catalyzes an alkyl-migration followed by a ketol-acid reduction of (S)-2-acetolactate (S2AL) to yield (R)-2,3-dihydroxy-isovalerate. In the isomerase reaction, S2AL is rearranged via a Mg-dependent methyl migration to produce 3-hydroxy-3-methyl-2-ketobutyrate (HMKB). In the reductase reaction, this 2-ketoacid undergoes a metal-dependent reduction by NADPH to yield (R)-2,3-dihydroxy-isovalerate. This chain is Ketol-acid reductoisomerase (NADP(+)), found in Methanococcus maripaludis (strain C5 / ATCC BAA-1333).